The primary structure comprises 417 residues: Serine hydroxymethyltransferase 2 (417 aa).

(6S)-5,6,7,8-tetrahydrofolate-binding positions include leucine 121 and glycine 125–leucine 127. Lysine 230 is modified (N6-(pyridoxal phosphate)lysine). Serine 355–phenylalanine 357 lines the (6S)-5,6,7,8-tetrahydrofolate pocket.

It belongs to the SHMT family. Homodimer. The cofactor is pyridoxal 5'-phosphate.

It is found in the cytoplasm. The catalysed reaction is (6R)-5,10-methylene-5,6,7,8-tetrahydrofolate + glycine + H2O = (6S)-5,6,7,8-tetrahydrofolate + L-serine. The protein operates within one-carbon metabolism; tetrahydrofolate interconversion. Its pathway is amino-acid biosynthesis; glycine biosynthesis; glycine from L-serine: step 1/1. Catalyzes the reversible interconversion of serine and glycine with tetrahydrofolate (THF) serving as the one-carbon carrier. This reaction serves as the major source of one-carbon groups required for the biosynthesis of purines, thymidylate, methionine, and other important biomolecules. Also exhibits THF-independent aldolase activity toward beta-hydroxyamino acids, producing glycine and aldehydes, via a retro-aldol mechanism. The chain is Serine hydroxymethyltransferase 2 from Pseudomonas savastanoi pv. phaseolicola (strain 1448A / Race 6) (Pseudomonas syringae pv. phaseolicola (strain 1448A / Race 6)).